Reading from the N-terminus, the 233-residue chain is Probable tetraheme cytochrome c-type (233 aa).

The signal sequence occupies residues 1–28 (MTRLQKGSIGTLLTGALLGIVLVAVVFG). The heme site is built by Cys39, Cys42, Met45, Cys67, Cys70, His71, Glu93, Cys131, Cys134, His135, Cys159, Cys162, His163, and His168. The interval 182–233 (QGKLVLKPEDDGDDEEADEDEDEETEEADDSSDSESASSSDNSDNEDDNNDE) is disordered. 2 stretches are compositionally biased toward acidic residues: residues 191–214 (DDGD…DSSD) and 224–233 (SDNEDDNNDE).

This sequence belongs to the NapC/NirT/NrfH family. Post-translationally, binds 4 heme groups per subunit.

Its subcellular location is the periplasm. This Nitrosomonas europaea (strain ATCC 19718 / CIP 103999 / KCTC 2705 / NBRC 14298) protein is Probable tetraheme cytochrome c-type (cycX1).